We begin with the raw amino-acid sequence, 267 residues long: Tryptophan synthase alpha chain (267 aa).

Residues E49 and D60 each act as proton acceptor in the active site.

Belongs to the TrpA family. Tetramer of two alpha and two beta chains.

The enzyme catalyses (1S,2R)-1-C-(indol-3-yl)glycerol 3-phosphate + L-serine = D-glyceraldehyde 3-phosphate + L-tryptophan + H2O. It participates in amino-acid biosynthesis; L-tryptophan biosynthesis; L-tryptophan from chorismate: step 5/5. In terms of biological role, the alpha subunit is responsible for the aldol cleavage of indoleglycerol phosphate to indole and glyceraldehyde 3-phosphate. This is Tryptophan synthase alpha chain from Solibacter usitatus (strain Ellin6076).